The following is a 403-amino-acid chain: Ribosomal RNA large subunit methyltransferase I (403 aa).

Positions 9–86 (YPRLVLSKGR…KAESIDIAFF (78 aa)) constitute a PUA domain.

The protein belongs to the methyltransferase superfamily. RlmI family.

The protein localises to the cytoplasm. The enzyme catalyses cytidine(1962) in 23S rRNA + S-adenosyl-L-methionine = 5-methylcytidine(1962) in 23S rRNA + S-adenosyl-L-homocysteine + H(+). In terms of biological role, specifically methylates the cytosine at position 1962 (m5C1962) of 23S rRNA. The chain is Ribosomal RNA large subunit methyltransferase I from Salmonella gallinarum (strain 287/91 / NCTC 13346).